A 456-amino-acid polypeptide reads, in one-letter code: Argininosuccinate lyase (456 aa).

This sequence belongs to the lyase 1 family. Argininosuccinate lyase subfamily.

Its subcellular location is the cytoplasm. It catalyses the reaction 2-(N(omega)-L-arginino)succinate = fumarate + L-arginine. It participates in amino-acid biosynthesis; L-arginine biosynthesis; L-arginine from L-ornithine and carbamoyl phosphate: step 3/3. The polypeptide is Argininosuccinate lyase (Shewanella amazonensis (strain ATCC BAA-1098 / SB2B)).